Consider the following 302-residue polypeptide: Beta-casein (302 aa).

Positions 1–15 (MKLLILTCLVALGFA) are cleaved as a signal peptide. Ser23 and Ser25 each carry phosphoserine. 16 tandem repeats follow at residues 144–151 (KREMLPIY), 152–159 (ERERLPAH), 160–167 (KRESLLAH), 168–175 (ERESLLAH), 176–182 (ERDILVP), 183–190 (QREMSFVP), 191–198 (EREFLFAS), 199–204 (ERVVLP), 205–214 (EQEKEILHND), 215–222 (EREVLAVH), 223–230 (KKEILPPF), 231–238 (EKEKVLPL), 241–247 (HRVVPLP), 248–255 (QREIVPPF), 256–262 (QRETLLP), and 263–269 (EEILPVN). The interval 144-269 (KREMLPIYER…LLPEEILPVN (126 aa)) is 16 X approximate tandem repeats.

This sequence belongs to the beta-casein family. Mammary gland specific. Secreted in milk.

It localises to the secreted. Its function is as follows. Important role in determination of the surface properties of the casein micelles. This chain is Beta-casein (CSN2), found in Notamacropus eugenii (Tammar wallaby).